A 365-amino-acid polypeptide reads, in one-letter code: DNA replication and repair protein RecF (365 aa).

30–37 (GPNGSGKT) lines the ATP pocket.

Belongs to the RecF family.

Its subcellular location is the cytoplasm. The RecF protein is involved in DNA metabolism; it is required for DNA replication and normal SOS inducibility. RecF binds preferentially to single-stranded, linear DNA. It also seems to bind ATP. The protein is DNA replication and repair protein RecF of Azotobacter vinelandii (strain DJ / ATCC BAA-1303).